Here is a 551-residue protein sequence, read N- to C-terminus: Probable terpene synthase 8 (551 aa).

Aspartate 307, aspartate 311, and glutamate 457 together coordinate Mg(2+). The short motif at 307–311 is the DDXXD motif element; that stretch reads DDTYD.

Belongs to the terpene synthase family. The cofactor is Mg(2+).

Functionally, probable sesquiterpene synthase. The polypeptide is Probable terpene synthase 8 (TPS8) (Ricinus communis (Castor bean)).